A 227-amino-acid chain; its full sequence is Cytochrome c oxidase subunit 2 (227 aa).

Residues M1–S14 are Mitochondrial intermembrane-facing. A helical transmembrane segment spans residues P15 to M45. Residues L46–Q59 are Mitochondrial matrix-facing. A helical membrane pass occupies residues E60–M87. The Mitochondrial intermembrane portion of the chain corresponds to D88–V227. Residues H161, C196, E198, C200, H204, and M207 each contribute to the Cu cation site. E198 contacts Mg(2+). Y218 is subject to Phosphotyrosine.

The protein belongs to the cytochrome c oxidase subunit 2 family. In terms of assembly, component of the cytochrome c oxidase (complex IV, CIV), a multisubunit enzyme composed of 14 subunits. The complex is composed of a catalytic core of 3 subunits MT-CO1, MT-CO2 and MT-CO3, encoded in the mitochondrial DNA, and 11 supernumerary subunits COX4I, COX5A, COX5B, COX6A, COX6B, COX6C, COX7A, COX7B, COX7C, COX8 and NDUFA4, which are encoded in the nuclear genome. The complex exists as a monomer or a dimer and forms supercomplexes (SCs) in the inner mitochondrial membrane with NADH-ubiquinone oxidoreductase (complex I, CI) and ubiquinol-cytochrome c oxidoreductase (cytochrome b-c1 complex, complex III, CIII), resulting in different assemblies (supercomplex SCI(1)III(2)IV(1) and megacomplex MCI(2)III(2)IV(2)). Found in a complex with TMEM177, COA6, COX18, COX20, SCO1 and SCO2. Interacts with TMEM177 in a COX20-dependent manner. Interacts with COX20. Interacts with COX16. Cu cation is required as a cofactor.

The protein resides in the mitochondrion inner membrane. It catalyses the reaction 4 Fe(II)-[cytochrome c] + O2 + 8 H(+)(in) = 4 Fe(III)-[cytochrome c] + 2 H2O + 4 H(+)(out). Functionally, component of the cytochrome c oxidase, the last enzyme in the mitochondrial electron transport chain which drives oxidative phosphorylation. The respiratory chain contains 3 multisubunit complexes succinate dehydrogenase (complex II, CII), ubiquinol-cytochrome c oxidoreductase (cytochrome b-c1 complex, complex III, CIII) and cytochrome c oxidase (complex IV, CIV), that cooperate to transfer electrons derived from NADH and succinate to molecular oxygen, creating an electrochemical gradient over the inner membrane that drives transmembrane transport and the ATP synthase. Cytochrome c oxidase is the component of the respiratory chain that catalyzes the reduction of oxygen to water. Electrons originating from reduced cytochrome c in the intermembrane space (IMS) are transferred via the dinuclear copper A center (CU(A)) of subunit 2 and heme A of subunit 1 to the active site in subunit 1, a binuclear center (BNC) formed by heme A3 and copper B (CU(B)). The BNC reduces molecular oxygen to 2 water molecules using 4 electrons from cytochrome c in the IMS and 4 protons from the mitochondrial matrix. The sequence is that of Cytochrome c oxidase subunit 2 (MT-CO2) from Vulpes vulpes (Red fox).